We begin with the raw amino-acid sequence, 304 residues long: tRNA-5-methyluridine(54) 2-sulfurtransferase (304 aa).

Positions 3, 6, 22, and 25 each coordinate Zn(2+). Positions 53 and 79 each coordinate ATP. [4Fe-4S] cluster-binding residues include Cys131 and Cys134. Positions 138 and 157 each coordinate ATP. Cys224 serves as a coordination point for [4Fe-4S] cluster. Cys274, Cys277, Cys286, and Cys289 together coordinate Zn(2+).

This sequence belongs to the TtcA family. TtuA subfamily. As to quaternary structure, homodimer. [4Fe-4S] cluster is required as a cofactor. Requires Mg(2+) as cofactor.

The enzyme catalyses 5-methyluridine(54) in tRNA + hydrogen sulfide + ATP = 5-methyl-2-thiouridine(54) in tRNA + AMP + diphosphate. It participates in tRNA modification. In terms of biological role, catalyzes the ATP-dependent 2-thiolation of 5-methyluridine residue at position 54 in the T loop of tRNAs, leading to 5-methyl-2-thiouridine (m(5)s(2)U or s(2)T). This modification allows thermal stabilization of tRNAs in thermophilic microorganisms, and is required for cell growth at high temperatures. Can use free sulfide as sulfur source in vitro. This chain is tRNA-5-methyluridine(54) 2-sulfurtransferase, found in Thermotoga maritima (strain ATCC 43589 / DSM 3109 / JCM 10099 / NBRC 100826 / MSB8).